Reading from the N-terminus, the 228-residue chain is Phosphatidylglycerophosphate phosphatase PTPMT2 (228 aa).

Residues 1 to 10 (MTDETEEDDT) are compositionally biased toward acidic residues. A disordered region spans residues 1-30 (MTDETEEDDTTQQRSSRNDGVSKNKGKGFK). The substrate site is built by tyrosine 48 and aspartate 126. The region spanning 66 to 213 (WWDQIDEYLL…VEEFSRLQSP (148 aa)) is the Tyrosine-protein phosphatase domain. The Phosphocysteine intermediate role is filled by cysteine 157. Positions 157-163 (CKAGRGR) match the Glucan phosphatase signature motif CXAGXGR motif. Residue 158-163 (KAGRGR) participates in substrate binding.

This sequence belongs to the protein-tyrosine phosphatase family. Non-receptor class dual specificity subfamily. In terms of tissue distribution, expressed in roots, leaves, stems and flowers. Expressed at low levels in stems and flowers.

It carries out the reaction O-phospho-L-seryl-[protein] + H2O = L-seryl-[protein] + phosphate. The enzyme catalyses O-phospho-L-threonyl-[protein] + H2O = L-threonyl-[protein] + phosphate. The catalysed reaction is O-phospho-L-tyrosyl-[protein] + H2O = L-tyrosyl-[protein] + phosphate. It catalyses the reaction a 1,2-diacyl-sn-glycero-3-phospho-(1'-sn-glycero-3'-phosphate) + H2O = a 1,2-diacyl-sn-glycero-3-phospho-(1'-sn-glycerol) + phosphate. It functions in the pathway phospholipid metabolism; phosphatidylglycerol biosynthesis; phosphatidylglycerol from CDP-diacylglycerol: step 2/2. Exhibits phosphatidylglycerophosphate phosphatase activity. Involved in root growth and columella cells organization. May possess protein phosphatase activity. The protein is Phosphatidylglycerophosphate phosphatase PTPMT2 of Arabidopsis thaliana (Mouse-ear cress).